A 2000-amino-acid chain; its full sequence is MAAVTMSVSGRKVASRPGPVPEAAQSFLYAPRTPNVGGPGGPQVEWTARRMVWVPSELHGFEAAALRDEGEEEAEVELAESGRRLRLPRDQIQRMNPPKFSKAEDMAELTCLNEASVLHNLRERYYSGLIYTYSGLFCVVINPYKQLPIYTEAIVEMYRGKKRHEVPPHVYAVTEGAYRSMLQDREDQSILCTGESGAGKTENTKKVIQYLAHVASSPKGRKEPGVPASVSTMSYGELERQLLQANPILEAFGNAKTVKNDNSSRFGKFIRINFDIAGYIVGANIETYLLEKSRAIRQAKDECSFHIFYQLLGGAGEQLKADLLLEPCSHYRFLTNGPSSSPGQERELFQETLESLRVLGLLPEEITAMLRTVSAVLQFGNIVLKKERNTDQATMPDNTAAQKLCRLLGLGVTDFSRALLTPRIKVGRDYVQKAQTKEQADFALEALAKATYERLFRWLVLRLNRALDRSPRQGASFLGILDIAGFEIFQLNSFEQLCINYTNEKLQQLFNHTMFVLEQEEYQREGIPWTFLDFGLDLQPCIDLIERPANPPGLLALLDEECWFPKATDKSFVEKVAQEQGSHPKFQRPRNLRDQADFSVLHYAGKVDYKASEWLMKNMDPLNDNVAALLHQSTDRLTAEIWKDVEGIVGLEQVSSLGDGPPGGRPRRGMFRTVGQLYKESLSRLMATLSNTNPSFVRCIVPNHEKRAGKLEPRLVLDQLRCNGVLEGIRICRQGFPNRILFQEFRQRYEILTPNAIPKGFMDGKQACEKMIQALELDPNLYRVGQSKIFFRAGVLAQLEEERDLKVTDIIVSFQAAARGYLARRAFQRRQQQQSALRVMQRNCAAYLKLRNWQWWRLFIKVKPLLQVTRQDEVLQARAQELQKVQELQQQSAREVGELQGRVAQLEEERTRLAEQLRAEAELCSEAEETRARLAARKQELELVVTELEARVGEEEECSRQLQSEKKRLQQHIQELESHLEAEEGARQKLQLEKVTTEAKMKKFEEDLLLLEDQNSKLSKERRLLEERLAEFSSQAAEEEEKVKSLNKLRLKYEATISDMEDRLKKEEKGRQELEKLKRRLDGESSELQEQMVEQKQRAEELLAQLGRKEDELQAALLRAEEEGGARAQLLKSLREAQAGLAEAQEDLEAERVARAKAEKQRRDLGEELEALRGELEDTLDSTNAQQELRSKREQEVTELKKALEEESRAHEVSMQELRQRHSQALVEMAEQLEQARRGKGVWEKTRLSLEAEVSELKAELSSLQTSRQEGEQKRRRLESQLQEVQGRSSDSERARSEAAEKLQRAQAELESVSTALSEAESKAIRLGKELSSAESQLHDTQELLQEETRAKLALGSRVRALEAEAAGLREQMEEEVVARERAGRELQSTQAQLSEWRRRQEEEAAVLEAGEEARRRAAREAETLTQRLAEKTEAVERLERARRRLQQELDDATVDLGQQKQLLSTLEKKQRKFDQLLAEEKAAVLRAVEDRERIEAEGREREARALSLTRALEEEQEAREELERQNRALRAELEALLSSKDDVGKNVHELERARKAAEQAASDLRTQVTELEDELTAAEDAKLRLEVTVQALKAQHERDLQGRDDAGEERRRQLAKQLRDAEVERDEERKQRALAMAARKKLELELEELKAQTSAAGQGKEEAVKQLKKMQVQMKELWREVEETRSSRDEMFTLSRENEKKLKGLEAEVLRLQEELAASDRARRQAQQDRDEMAEEVASGNLSKAATLEEKRQLEGRLSQLEEELEEEQNNSELLKDHYRKLVLQVESLTTELSAERSFSAKAESGRQQLERQIQELRARLGEEDAGARARQKMLIAALESKLAQAEEQLEQESRERILSGKLVRRAEKRLKEVVLQVDEERRVADQVRDQLEKSNLRLKQLKRQLEEAEEEASRAQAGRRRLQRELEDVTESAESMNREVTTLRNRLRRGPLTFTTRTVRQVFRLEEGVASDEEEAEGAEPGSAPGQEPEAPPPATPQ.

Alanine 2 is modified (N-acetylalanine). Threonine 33 is modified (phosphothreonine). One can recognise a Myosin N-terminal SH3-like domain in the interval 47-97 (TARRMVWVPSELHGFEAAALRDEGEEEAEVELAESGRRLRLPRDQIQRMNP). A Phosphoserine modification is found at serine 56. Residues 101–804 (SKAEDMAELT…VLAQLEEERD (704 aa)) form the Myosin motor domain. Position 194–201 (194–201 (GESGAGKT)) interacts with ATP. Residues 682–704 (LSRLMATLSNTNPSFVRCIVPNH) are actin-binding. The IQ domain maps to 807 to 836 (VTDIIVSFQAAARGYLARRAFQRRQQQQSA). Positions 866 to 1951 (LQVTRQDEVL…VTTLRNRLRR (1086 aa)) form a coiled coil. Residue serine 925 is modified to Phosphoserine. A disordered region spans residues 1173-1197 (RGELEDTLDSTNAQQELRSKREQEV). At threonine 1198 the chain carries Phosphothreonine. A phosphoserine mark is found at serine 1249 and serine 1280. Disordered stretches follow at residues 1260–1311 (ELSS…AELE), 1597–1629 (HERDLQGRDDAGEERRRQLAKQLRDAEVERDEE), 1720–1751 (SDRARRQAQQDRDEMAEEVASGNLSKAATLEE), 1910–1942 (AEEEASRAQAGRRRLQRELEDVTESAESMNREV), and 1967–2000 (LEEGVASDEEEAEGAEPGSAPGQEPEAPPPATPQ). A compositionally biased stretch (basic and acidic residues) spans 1290–1304 (SDSERARSEAAEKLQ). Over residues 1720-1732 (SDRARRQAQQDRD) the composition is skewed to basic and acidic residues. The span at 1971–1980 (VASDEEEAEG) shows a compositional bias: acidic residues. Residues serine 1973 and serine 1985 each carry the phosphoserine modification. Over residues 1981–1991 (AEPGSAPGQEP) the composition is skewed to low complexity. Position 1998 is a phosphothreonine (threonine 1998).

The protein belongs to the TRAFAC class myosin-kinesin ATPase superfamily. Myosin family. Myosin is a hexameric protein that consists of 2 heavy chain subunits (MHC), 2 alkali light chain subunits (MLC) and 2 regulatory light chain subunits (MLC-2). In terms of tissue distribution, highest levels in lung, kidney, brain and colon, very low levels in liver and bladder and no expression in spleen or seminal vesicle (at protein level). Isoform 1 is expressed in liver, kidney and testis with low levels in skeletal muscle and heart. Isoform 1 and isoform 2 are expressed in brain and lung. Isoform 2 is the main isoform expressed in skeletal muscle and heart. Isoform 3 is limited to brain stem, cerebellum and spinal cord.

Its function is as follows. Cellular myosin that appears to play a role in cytokinesis, cell shape, and specialized functions such as secretion and capping. The protein is Myosin-14 (Myh14) of Mus musculus (Mouse).